The primary structure comprises 159 residues: 6,7-dimethyl-8-ribityllumazine synthase (159 aa).

Residues F22, 57 to 59 (AVE), and 81 to 83 (AVI) contribute to the 5-amino-6-(D-ribitylamino)uracil site. A (2S)-2-hydroxy-3-oxobutyl phosphate-binding site is contributed by 86–87 (GT). The active-site Proton donor is H89. F114 lines the 5-amino-6-(D-ribitylamino)uracil pocket. R128 contributes to the (2S)-2-hydroxy-3-oxobutyl phosphate binding site.

This sequence belongs to the DMRL synthase family. As to quaternary structure, forms an icosahedral capsid composed of 60 subunits, arranged as a dodecamer of pentamers.

The enzyme catalyses (2S)-2-hydroxy-3-oxobutyl phosphate + 5-amino-6-(D-ribitylamino)uracil = 6,7-dimethyl-8-(1-D-ribityl)lumazine + phosphate + 2 H2O + H(+). The protein operates within cofactor biosynthesis; riboflavin biosynthesis; riboflavin from 2-hydroxy-3-oxobutyl phosphate and 5-amino-6-(D-ribitylamino)uracil: step 1/2. Catalyzes the formation of 6,7-dimethyl-8-ribityllumazine by condensation of 5-amino-6-(D-ribitylamino)uracil with 3,4-dihydroxy-2-butanone 4-phosphate. This is the penultimate step in the biosynthesis of riboflavin. The polypeptide is 6,7-dimethyl-8-ribityllumazine synthase (Shewanella denitrificans (strain OS217 / ATCC BAA-1090 / DSM 15013)).